Reading from the N-terminus, the 129-residue chain is Small ribosomal subunit protein uS13 (129 aa).

The disordered stretch occupies residues 96–129 (GLPVRGQRTSTNARTRKGPRKTVGVSKAAAAAKA).

It belongs to the universal ribosomal protein uS13 family. In terms of assembly, part of the 30S ribosomal subunit. Forms a loose heterodimer with protein S19. Forms two bridges to the 50S subunit in the 70S ribosome.

Located at the top of the head of the 30S subunit, it contacts several helices of the 16S rRNA. In the 70S ribosome it contacts the 23S rRNA (bridge B1a) and protein L5 of the 50S subunit (bridge B1b), connecting the 2 subunits; these bridges are implicated in subunit movement. Contacts the tRNAs in the A and P-sites. The sequence is that of Small ribosomal subunit protein uS13 from Opitutus terrae (strain DSM 11246 / JCM 15787 / PB90-1).